Consider the following 271-residue polypeptide: Phosphatidylglycerol--prolipoprotein diacylglyceryl transferase (271 aa).

A run of 4 helical transmembrane segments spans residues 25–45, 60–80, 103–123, and 131–151; these read WYGI…KFFV, YFIW…ILIY, FVGI…IATL, and ANPW…YVFG. Arg152 lines the a 1,2-diacyl-sn-glycero-3-phospho-(1'-sn-glycerol) pocket. 3 consecutive transmembrane segments (helical) span residues 181-201, 209-229, and 235-255; these read PSQL…VYLA, GELI…CEFY, and GIGF…IMFI.

The protein belongs to the Lgt family.

The protein resides in the cell inner membrane. The catalysed reaction is L-cysteinyl-[prolipoprotein] + a 1,2-diacyl-sn-glycero-3-phospho-(1'-sn-glycerol) = an S-1,2-diacyl-sn-glyceryl-L-cysteinyl-[prolipoprotein] + sn-glycerol 1-phosphate + H(+). It functions in the pathway protein modification; lipoprotein biosynthesis (diacylglyceryl transfer). Its function is as follows. Catalyzes the transfer of the diacylglyceryl group from phosphatidylglycerol to the sulfhydryl group of the N-terminal cysteine of a prolipoprotein, the first step in the formation of mature lipoproteins. The chain is Phosphatidylglycerol--prolipoprotein diacylglyceryl transferase from Campylobacter jejuni (strain RM1221).